Here is a 624-residue protein sequence, read N- to C-terminus: Translocator protein BipB (624 aa).

The interval 54-99 (LASEQCDAQPVTDDARLDRLDDKPALRAPRSDAAHAADGNARGNGG) is disordered. A compositionally biased stretch (basic and acidic residues) spans 66–88 (DDARLDRLDDKPALRAPRSDAAH). Residues 313–343 (EMQAKREAELQKKSDEYQEQVKKAEEMQKTM) adopt a coiled-coil conformation. Helical transmembrane passes span 359-379 (FAAA…GLAL), 405-425 (AILK…LVAC), and 434-454 (LAGA…AAFV).

This sequence belongs to the SctE/SipB/YopB family.

The protein localises to the secreted. The protein resides in the host membrane. Plays a role in the bacterium-induced formation of multinucleated giant cell (MNGC), which is formed after host cell fusion, as well as in the intercellular spreading of bacteria and in the induction of apoptosis in macrophages. May act in concert with other effector proteins to induce fusion of host cell membranes. This Burkholderia thailandensis (strain ATCC 700388 / DSM 13276 / CCUG 48851 / CIP 106301 / E264) protein is Translocator protein BipB (bipB).